The sequence spans 463 residues: UDP-N-acetylmuramate--L-alanine ligase (463 aa).

Residue 112-118 (GTHGKTT) participates in ATP binding.

Belongs to the MurCDEF family.

It localises to the cytoplasm. The enzyme catalyses UDP-N-acetyl-alpha-D-muramate + L-alanine + ATP = UDP-N-acetyl-alpha-D-muramoyl-L-alanine + ADP + phosphate + H(+). It participates in cell wall biogenesis; peptidoglycan biosynthesis. Functionally, cell wall formation. The chain is UDP-N-acetylmuramate--L-alanine ligase from Thiobacillus denitrificans (strain ATCC 25259 / T1).